The following is a 270-amino-acid chain: UPF0354 protein BCAH820_4810 (270 aa).

The protein belongs to the UPF0354 family.

The chain is UPF0354 protein BCAH820_4810 from Bacillus cereus (strain AH820).